A 444-amino-acid polypeptide reads, in one-letter code: Argininosuccinate synthase (444 aa).

ATP contacts are provided by residues 18–26 (AFSGGLDTS) and Ala-44. Tyr-100 is an L-citrulline binding site. Gly-130 and Thr-132 together coordinate ATP. L-aspartate is bound by residues Thr-132, Asn-136, and Asp-137. Position 136 (Asn-136) interacts with L-citrulline. Asp-137 contributes to the ATP binding site. Arg-140 and Ser-193 together coordinate L-citrulline. Asp-195 is an ATP binding site. Residues Thr-202, Glu-204, and Glu-281 each contribute to the L-citrulline site.

It belongs to the argininosuccinate synthase family. Type 2 subfamily. In terms of assembly, homotetramer.

It is found in the cytoplasm. The catalysed reaction is L-citrulline + L-aspartate + ATP = 2-(N(omega)-L-arginino)succinate + AMP + diphosphate + H(+). Its pathway is amino-acid biosynthesis; L-arginine biosynthesis; L-arginine from L-ornithine and carbamoyl phosphate: step 2/3. The protein is Argininosuccinate synthase of Haemophilus influenzae (strain PittEE).